Here is a 360-residue protein sequence, read N- to C-terminus: Dual-specificity RNA methyltransferase RlmN (360 aa).

The active-site Proton acceptor is glutamate 91. Residues 110 to 343 form the Radical SAM core domain; that stretch reads RSEKYTVCIS…CTIRESKGLD (234 aa). An intrachain disulfide couples cysteine 117 to cysteine 348. 3 residues coordinate [4Fe-4S] cluster: cysteine 124, cysteine 128, and cysteine 131. S-adenosyl-L-methionine contacts are provided by residues 174 to 175, serine 206, 229 to 231, and asparagine 305; these read GE and SLH. The active-site S-methylcysteine intermediate is the cysteine 348.

Belongs to the radical SAM superfamily. RlmN family. Requires [4Fe-4S] cluster as cofactor.

The protein localises to the cytoplasm. It catalyses the reaction adenosine(2503) in 23S rRNA + 2 reduced [2Fe-2S]-[ferredoxin] + 2 S-adenosyl-L-methionine = 2-methyladenosine(2503) in 23S rRNA + 5'-deoxyadenosine + L-methionine + 2 oxidized [2Fe-2S]-[ferredoxin] + S-adenosyl-L-homocysteine. The catalysed reaction is adenosine(37) in tRNA + 2 reduced [2Fe-2S]-[ferredoxin] + 2 S-adenosyl-L-methionine = 2-methyladenosine(37) in tRNA + 5'-deoxyadenosine + L-methionine + 2 oxidized [2Fe-2S]-[ferredoxin] + S-adenosyl-L-homocysteine. Its function is as follows. Specifically methylates position 2 of adenine 2503 in 23S rRNA and position 2 of adenine 37 in tRNAs. m2A2503 modification seems to play a crucial role in the proofreading step occurring at the peptidyl transferase center and thus would serve to optimize ribosomal fidelity. The chain is Dual-specificity RNA methyltransferase RlmN from Aliarcobacter butzleri (strain RM4018) (Arcobacter butzleri).